Here is a 257-residue protein sequence, read N- to C-terminus: Beta-fibrinogenase mucrofibrase-3 (257 aa).

Residues 1–18 (MVLIRVLANLLILQLSYA) form the signal peptide. The propeptide occupies 19–24 (QKSSEL). The Peptidase S1 domain occupies 25-248 (VIGGDECNIN…HLDWIKGIIA (224 aa)). Intrachain disulfides connect C31–C162, C49–C65, C97–C255, C141–C209, C173–C188, and C199–C224. Residues H64 and D109 each act as charge relay system in the active site. The active-site Charge relay system is S203.

It belongs to the peptidase S1 family. Snake venom subfamily. In terms of assembly, monomer. As to expression, expressed by the venom gland.

It is found in the secreted. Functionally, snake venom serine protease with fibrinogenolytic activities. Cleaves beta-chain of fibrinogen (FGB) efficiently and shows relatively lower activity on alpha-chain. In Protobothrops mucrosquamatus (Taiwan habu), this protein is Beta-fibrinogenase mucrofibrase-3.